A 64-amino-acid polypeptide reads, in one-letter code: MSSKCSNCDCSDSSQCTKKGYSFDLVIVETENRSMDTVIMDAPAAENGGNCKCGPSCACVDCKC.

It belongs to the metallothionein superfamily. Type 15 family.

In terms of biological role, metallothioneins have a high content of cysteine residues that bind various heavy metals. This is Metallothionein-like protein 1 (MT1) from Prunus avium (Cherry).